We begin with the raw amino-acid sequence, 292 residues long: Tubulin beta chain (292 aa).

GTP contacts are provided by Asn49 and Asn71. The tract at residues 265–292 is disordered; that stretch reads SEYQQYQDATAEEEGEFDEEEEGDEEAA. A compositionally biased stretch (acidic residues) spans 274–292; that stretch reads TAEEEGEFDEEEEGDEEAA.

The protein belongs to the tubulin family. As to quaternary structure, dimer of alpha and beta chains. A typical microtubule is a hollow water-filled tube with an outer diameter of 25 nm and an inner diameter of 15 nM. Alpha-beta heterodimers associate head-to-tail to form protofilaments running lengthwise along the microtubule wall with the beta-tubulin subunit facing the microtubule plus end conferring a structural polarity. Microtubules usually have 13 protofilaments but different protofilament numbers can be found in some organisms and specialized cells. The cofactor is Mg(2+).

Its subcellular location is the cytoplasm. It is found in the cytoskeleton. Tubulin is the major constituent of microtubules, a cylinder consisting of laterally associated linear protofilaments composed of alpha- and beta-tubulin heterodimers. Microtubules grow by the addition of GTP-tubulin dimers to the microtubule end, where a stabilizing cap forms. Below the cap, tubulin dimers are in GDP-bound state, owing to GTPase activity of alpha-tubulin. In Strongylocentrotus purpuratus (Purple sea urchin), this protein is Tubulin beta chain.